A 207-amino-acid polypeptide reads, in one-letter code: Cytochrome c biogenesis ATP-binding export protein CcmA 1 (207 aa).

Residues 6–207 (LEALDLAGVR…KTSQTVRMGA (202 aa)) enclose the ABC transporter domain. 38–45 (GENGSGKT) contacts ATP.

Belongs to the ABC transporter superfamily. CcmA exporter (TC 3.A.1.107) family. In terms of assembly, the complex is composed of two ATP-binding proteins (CcmA) and two transmembrane proteins (CcmB).

The protein resides in the cell inner membrane. The enzyme catalyses heme b(in) + ATP + H2O = heme b(out) + ADP + phosphate + H(+). Part of the ABC transporter complex CcmAB involved in the biogenesis of c-type cytochromes; once thought to export heme, this seems not to be the case, but its exact role is uncertain. Responsible for energy coupling to the transport system. The chain is Cytochrome c biogenesis ATP-binding export protein CcmA 1 from Cupriavidus metallidurans (strain ATCC 43123 / DSM 2839 / NBRC 102507 / CH34) (Ralstonia metallidurans).